Consider the following 141-residue polypeptide: Prefoldin subunit alpha (141 aa).

Belongs to the prefoldin subunit alpha family. Heterohexamer of two alpha and four beta subunits.

The protein localises to the cytoplasm. Molecular chaperone capable of stabilizing a range of proteins. Seems to fulfill an ATP-independent, HSP70-like function in archaeal de novo protein folding. The polypeptide is Prefoldin subunit alpha (pfdA) (Methanothermobacter thermautotrophicus (strain ATCC 29096 / DSM 1053 / JCM 10044 / NBRC 100330 / Delta H) (Methanobacterium thermoautotrophicum)).